The primary structure comprises 213 residues: BAG family molecular chaperone regulator 6, mitochondrial (213 aa).

Residues D53 to E82 form the IQ domain. One can recognise a BAG domain in the interval A75–L152.

In terms of assembly, interacts with CAM1-1 under normal conditions. Dissociation of the interaction when calcium-CAM1-1 binding increases under saline-alkaline stress.

It localises to the mitochondrion. Co-chaperone that regulates stress responses. Acts as a negative regulator of saline-alkaline stress tolerance. May participate in stress response through regulating the homeostasis of iron, manganese and zinc ions. This chain is BAG family molecular chaperone regulator 6, mitochondrial, found in Oryza sativa subsp. japonica (Rice).